A 141-amino-acid chain; its full sequence is Large ribosomal subunit protein bL17 (141 aa).

This sequence belongs to the bacterial ribosomal protein bL17 family. As to quaternary structure, part of the 50S ribosomal subunit. Contacts protein L32.

This is Large ribosomal subunit protein bL17 from Sinorhizobium medicae (strain WSM419) (Ensifer medicae).